Here is a 1595-residue protein sequence, read N- to C-terminus: Collagen-like protein 2 (1595 aa).

2 N-linked (GlcNAc...) asparagine; by host glycosylation sites follow: N87 and N134. 4 consecutive Collagen-like domains span residues 97 to 155 (LRGE…NGDV), 175 to 233 (QVGL…KGEG), 236 to 295 (GSKG…KGDI), and 299 to 358 (GIKG…KGMK). The segment covering 181-190 (SQGDQGYKGD) has biased composition (low complexity). 2 disordered regions span residues 181–577 (SQGD…SPDL) and 604–1326 (TDIK…GIKG). 14 stretches are compositionally biased toward basic and acidic residues: residues 191–200 (QGSKGDKGQK), 209–448 (KGDK…KGTK), 456–466 (YKGDIGDKGIK), 474–501 (DKGDKGIKGDKGDKGIKGDDGSKGDKGY), 510–561 (DNGE…DKGE), 606–615 (IKGEKGDKGE), 622–702 (KGDK…DKGD), 718–825 (KGDK…DKGI), 832–883 (KGDK…KGFK), 895–1041 (KGDK…DKGI), 1048–1098 (KGNK…DQGT), 1107–1151 (KGDK…KGIK), 1159–1250 (NKGD…KGDQ), and 1265–1300 (KGDKGDKGDKGDKGDKGDKGAKGDKGDKGDKGDQGI). N274, N280, and N286 each carry an N-linked (GlcNAc...) asparagine; by host glycan. N373, N382, N400, and N409 each carry an N-linked (GlcNAc...) asparagine; by host glycan. 5 Collagen-like domains span residues 380 to 559 (GDNG…KGDK), 608 to 907 (GEKG…KGEN), 920 to 1039 (GDKG…KGDK), 1043 to 1102 (GTNG…KGET), and 1128 to 1307 (GDQG…SGAS). N-linked (GlcNAc...) asparagine; by host glycans are attached at residues N1345, N1420, and N1545. The segment at 1538–1585 (SAFDKGGNGSIRFNPPSSGTKGSGGGGSVQGGGGTIPNDGYPGGNGGP) is disordered. Gly residues predominate over residues 1558–1585 (KGSGGGGSVQGGGGTIPNDGYPGGNGGP).

In terms of processing, may be hydroxylated on lysine by the viral-encoded procollagen-lysine,2-oxoglutarate 5-dioxygenase.

It is found in the virion. Functionally, may participate in the formation of a layer of cross-linked glycosylated fibrils at the viral surface thus giving it a hairy-like appearance. The chain is Collagen-like protein 2 from Acanthamoeba polyphaga (Amoeba).